The primary structure comprises 201 residues: Retinol-binding protein 4 (201 aa).

A signal peptide spans 1–18; that stretch reads MEWVWALVLLAALGSAQA. Intrachain disulfides connect C22–C178, C88–C192, and C138–C147. Substrate is bound at residue Q116. Omega-N-methylarginine is present on R139.

The protein belongs to the calycin superfamily. Lipocalin family. In terms of assembly, interacts with TTR. Interaction with TTR prevents its loss by filtration through the kidney glomeruli. Interacts with STRA6.

It is found in the secreted. Functionally, retinol-binding protein that mediates retinol transport in blood plasma. Delivers retinol from the liver stores to the peripheral tissues. Transfers the bound all-trans retinol to STRA6, that then facilitates retinol transport across the cell membrane. The polypeptide is Retinol-binding protein 4 (RBP4) (Sus scrofa (Pig)).